The chain runs to 242 residues: Eukaryotic translation initiation factor 3 subunit J (242 aa).

A compositionally biased stretch (acidic residues) spans 1 to 10 (MASWDDEDFE). 3 disordered regions span residues 1-58 (MASW…KAQR), 71-97 (MKLKPEDASTKRDRQRQAELDSDMMNA), and 201-242 (REEK…DDFM). Positions 11–21 (VPAAATPAVPA) are enriched in low complexity. Positions 23-38 (WDDDEEEDVMDSWDAE) are enriched in acidic residues. Over residues 71-89 (MKLKPEDASTKRDRQRQAE) the composition is skewed to basic and acidic residues.

The protein belongs to the eIF-3 subunit J family. In terms of assembly, component of the eukaryotic translation initiation factor 3 (eIF-3) complex.

It localises to the cytoplasm. In terms of biological role, component of the eukaryotic translation initiation factor 3 (eIF-3) complex, which is involved in protein synthesis of a specialized repertoire of mRNAs and, together with other initiation factors, stimulates binding of mRNA and methionyl-tRNAi to the 40S ribosome. The eIF-3 complex specifically targets and initiates translation of a subset of mRNAs involved in cell proliferation. The protein is Eukaryotic translation initiation factor 3 subunit J of Yarrowia lipolytica (strain CLIB 122 / E 150) (Yeast).